Consider the following 295-residue polypeptide: uncharacterized protein (295 aa).

A signal peptide spans 1–19 (MFRKFLFIPLLIVTSLVKA). The interval 274–295 (KRNNPPLKNNNAKSKNSYETHK) is disordered. A compositionally biased stretch (low complexity) spans 276 to 288 (NNPPLKNNNAKSK).

This is an uncharacterized protein from Rickettsia typhi (strain ATCC VR-144 / Wilmington).